Here is a 426-residue protein sequence, read N- to C-terminus: Protein CgeD (426 aa).

To B.subtilis spore coat polysaccharide biosynthesis protein SpsA.

Its function is as follows. May be involved in maturation of the outermost layer of the spore. The sequence is that of Protein CgeD (cgeD) from Bacillus subtilis (strain 168).